The primary structure comprises 131 residues: Ribosome-binding factor A (131 aa).

The protein belongs to the RbfA family. Monomer. Binds 30S ribosomal subunits, but not 50S ribosomal subunits or 70S ribosomes.

It is found in the cytoplasm. One of several proteins that assist in the late maturation steps of the functional core of the 30S ribosomal subunit. Associates with free 30S ribosomal subunits (but not with 30S subunits that are part of 70S ribosomes or polysomes). Required for efficient processing of 16S rRNA. May interact with the 5'-terminal helix region of 16S rRNA. The polypeptide is Ribosome-binding factor A (Thermotoga maritima (strain ATCC 43589 / DSM 3109 / JCM 10099 / NBRC 100826 / MSB8)).